A 208-amino-acid polypeptide reads, in one-letter code: N-(5'-phosphoribosyl)anthranilate isomerase (208 aa).

The protein belongs to the TrpF family.

The enzyme catalyses N-(5-phospho-beta-D-ribosyl)anthranilate = 1-(2-carboxyphenylamino)-1-deoxy-D-ribulose 5-phosphate. The protein operates within amino-acid biosynthesis; L-tryptophan biosynthesis; L-tryptophan from chorismate: step 3/5. This Neisseria gonorrhoeae (strain NCCP11945) protein is N-(5'-phosphoribosyl)anthranilate isomerase.